A 458-amino-acid polypeptide reads, in one-letter code: MHPKLDILILAAGKGTRMRSDLPKVLHQLAGRPLLGHVVATAQALGAARTCVVYGFGGEAVPQAMAEATLSFVLQAEQHGTGHAVKQALPQLADDGVTLVLYGDVPLIHTTTLAPLAAAADAGKFGLLTVNLAHPDGYGRIVRENARVARIVEHKDASAAERAIQEVNTGILAVPTRHLKRWIGELRNDNAQGEYYLTDIVALAVRDGVEIETHQPQHDWEVLGVNSKAQLAELERIHQNEVAQRLLADGVTLMDPARLDVRGSLVCGRDVTIDVNCVFEGRVELGDGVQIGANCVLRNVSIAAGTRLDAFTLIDDATIGEAGRLGPFSRIRPGTRLARDVHVGNFVEIKNSAIDAGSKINHLSYVGDTTMGQRVNIGAGTITCNYDGANKHRTVIEDDVFVGSDTQLVAPVTVGQGATLGAGTTLTRDAPPGELTLSRAKQQTISGWKRPIKPKKEG.

The segment at 1–228 is pyrophosphorylase; sequence MHPKLDILIL…DWEVLGVNSK (228 aa). UDP-N-acetyl-alpha-D-glucosamine is bound by residues 10–13, lysine 24, glutamine 75, 80–81, 102–104, glycine 139, glutamate 153, asparagine 168, and asparagine 226; these read LAAG, GT, and YGD. Residue aspartate 104 participates in Mg(2+) binding. Asparagine 226 is a binding site for Mg(2+). A linker region spans residues 229–249; that stretch reads AQLAELERIHQNEVAQRLLAD. The interval 250–458 is N-acetyltransferase; it reads GVTLMDPARL…KRPIKPKKEG (209 aa). 2 residues coordinate UDP-N-acetyl-alpha-D-glucosamine: arginine 332 and lysine 350. Histidine 362 functions as the Proton acceptor in the catalytic mechanism. Tyrosine 365 and asparagine 376 together coordinate UDP-N-acetyl-alpha-D-glucosamine. Acetyl-CoA contacts are provided by residues alanine 379, 385-386, serine 404, alanine 422, and arginine 439; that span reads NY.

It in the N-terminal section; belongs to the N-acetylglucosamine-1-phosphate uridyltransferase family. The protein in the C-terminal section; belongs to the transferase hexapeptide repeat family. As to quaternary structure, homotrimer. Mg(2+) is required as a cofactor.

It localises to the cytoplasm. The catalysed reaction is alpha-D-glucosamine 1-phosphate + acetyl-CoA = N-acetyl-alpha-D-glucosamine 1-phosphate + CoA + H(+). The enzyme catalyses N-acetyl-alpha-D-glucosamine 1-phosphate + UTP + H(+) = UDP-N-acetyl-alpha-D-glucosamine + diphosphate. The protein operates within nucleotide-sugar biosynthesis; UDP-N-acetyl-alpha-D-glucosamine biosynthesis; N-acetyl-alpha-D-glucosamine 1-phosphate from alpha-D-glucosamine 6-phosphate (route II): step 2/2. It functions in the pathway nucleotide-sugar biosynthesis; UDP-N-acetyl-alpha-D-glucosamine biosynthesis; UDP-N-acetyl-alpha-D-glucosamine from N-acetyl-alpha-D-glucosamine 1-phosphate: step 1/1. Its pathway is bacterial outer membrane biogenesis; LPS lipid A biosynthesis. Catalyzes the last two sequential reactions in the de novo biosynthetic pathway for UDP-N-acetylglucosamine (UDP-GlcNAc). The C-terminal domain catalyzes the transfer of acetyl group from acetyl coenzyme A to glucosamine-1-phosphate (GlcN-1-P) to produce N-acetylglucosamine-1-phosphate (GlcNAc-1-P), which is converted into UDP-GlcNAc by the transfer of uridine 5-monophosphate (from uridine 5-triphosphate), a reaction catalyzed by the N-terminal domain. The sequence is that of Bifunctional protein GlmU from Thiobacillus denitrificans (strain ATCC 25259 / T1).